Here is a 122-residue protein sequence, read N- to C-terminus: Flowering-promoting factor 1-like protein 3 (122 aa).

The segment at 16–36 (ENPGSEESSSAGDGGGGGRRK) is disordered.

It belongs to the FPF1 family.

The sequence is that of Flowering-promoting factor 1-like protein 3 from Oryza sativa subsp. japonica (Rice).